A 157-amino-acid chain; its full sequence is MLELDIQRATDAATPEDAALRRWCELALRQRSADSEMTIRLVDEAEGRELNHTYRHKDYATNVLSFPADVPDDLLDIPLLGDLVICVAVVEREAAEQGKSLEAHWAHLVIHGCLHLLGYDHIEDEEAEEMESLERELLAELGHPDPYADDETDTITH.

3 residues coordinate Zn(2+): H111, H115, and H121.

It belongs to the endoribonuclease YbeY family. Zn(2+) serves as cofactor.

It is found in the cytoplasm. Functionally, single strand-specific metallo-endoribonuclease involved in late-stage 70S ribosome quality control and in maturation of the 3' terminus of the 16S rRNA. The protein is Endoribonuclease YbeY of Pseudomonas putida (strain ATCC 47054 / DSM 6125 / CFBP 8728 / NCIMB 11950 / KT2440).